Consider the following 126-residue polypeptide: MADEIAKAQVARPGGDTIFGKIIRKEIPAKIIYEDDQCLAFHDISPQAPTHFLVIPKKYISQISAAEDDDESLLGHLMIVGKKCAADLGLKKGYRMVVNEGSDGGQSVYHVHLHVLGGRQMNWPPG.

A2 bears the N-acetylalanine mark. The region spanning 18 to 126 (IFGKIIRKEI…GGRQMNWPPG (109 aa)) is the HIT domain. K21 and K30 each carry N6-acetyllysine. 43 to 44 (DI) provides a ligand contact to AMP. 2 positions are modified to phosphoserine: S45 and S72. Residues N99, 105-107 (GQS), and 112-114 (HLH) contribute to the AMP site. The Histidine triad motif signature appears at 110-114 (HVHLH). The active-site Tele-AMP-histidine intermediate is H112.

The protein belongs to the HINT family. Homodimer. Interacts with CDK7. Interacts with RUVBL1 and RUVBL2 and is associated with the LEF1/TCF1-CTNNB1 complex and with a KAT5 histone acetyltransferase complex. Identified in a complex with MITF and CTNNB1. Interacts with CDC34 and RBX1, and is part of a SCF (SKP2-CUL1-F-box protein) E3 ubiquitin-protein ligase complex. Interacts with SUMO1, SUMO2 and RGS17. Interacts with the Ten-1 ICD form of TENM1. Interacts with CALM1; interaction increases in the presence of calcium ions. Widely expressed.

It is found in the cytoplasm. The protein resides in the nucleus. The enzyme catalyses adenosine 5'-phosphoramidate + H2O = AMP + NH4(+). Functionally, exhibits adenosine 5'-monophosphoramidase activity, hydrolyzing purine nucleotide phosphoramidates with a single phosphate group such as adenosine 5'monophosphoramidate (AMP-NH2) to yield AMP and NH2. Hydrolyzes adenosine 5'monophosphomorpholidate (AMP-morpholidate) and guanosine 5'monophosphomorpholidate (GMP-morpholidate). Hydrolyzes lysyl-AMP (AMP-N-epsilon-(N-alpha-acetyl lysine methyl ester)) generated by lysine tRNA ligase, as well as Met-AMP, His-AMP and Asp-AMP, lysyl-GMP (GMP-N-epsilon-(N-alpha-acetyl lysine methyl ester)) and AMP-N-alanine methyl ester. Can also convert adenosine 5'-O-phosphorothioate and guanosine 5'-O-phosphorothioate to the corresponding nucleoside 5'-O-phosphates with concomitant release of hydrogen sulfide. In addition, functions as a scaffolding protein that modulates transcriptional activation by the LEF1/TCF1-CTNNB1 complex and by the complex formed with MITF and CTNNB1. Modulates p53/TP53 levels and p53/TP53-mediated apoptosis. Modulates proteasomal degradation of target proteins by the SCF (SKP2-CUL1-F-box protein) E3 ubiquitin-protein ligase complex. Also exhibits SUMO-specific isopeptidase activity, deconjugating SUMO1 from RANGAP1 and RGS17. In Bos taurus (Bovine), this protein is Adenosine 5'-monophosphoramidase HINT1 (HINT1).